The chain runs to 882 residues: DNA mismatch repair protein MutS (882 aa).

An ATP-binding site is contributed by 627–634 (GPNMAGKS).

This sequence belongs to the DNA mismatch repair MutS family.

Its function is as follows. This protein is involved in the repair of mismatches in DNA. It is possible that it carries out the mismatch recognition step. This protein has a weak ATPase activity. This is DNA mismatch repair protein MutS from Anaeromyxobacter dehalogenans (strain 2CP-1 / ATCC BAA-258).